The sequence spans 395 residues: Flagellin A (395 aa).

The protein belongs to the bacterial flagellin family.

It localises to the secreted. The protein resides in the bacterial flagellum. Flagellin is the subunit protein which polymerizes to form the filaments of bacterial flagella. Homomer of FlaA is able to form a functional filament. The polypeptide is Flagellin A (flaA) (Rhizobium meliloti (Ensifer meliloti)).